The sequence spans 59 residues: Protein translocase subunit SecE (59 aa).

A helical membrane pass occupies residues 35–55 (IVAIGIAIIGVVGFIIVLIGE).

Belongs to the SecE/SEC61-gamma family. In terms of assembly, component of the Sec protein translocase complex. Heterotrimer consisting of SecY (alpha), SecG (beta) and SecE (gamma) subunits. The heterotrimers can form oligomers, although 1 heterotrimer is thought to be able to translocate proteins. Interacts with the ribosome. May interact with SecDF, and other proteins may be involved.

It is found in the cell membrane. Its function is as follows. Essential subunit of the Sec protein translocation channel SecYEG. Clamps together the 2 halves of SecY. May contact the channel plug during translocation. In Methanobrevibacter smithii (strain ATCC 35061 / DSM 861 / OCM 144 / PS), this protein is Protein translocase subunit SecE.